A 287-amino-acid polypeptide reads, in one-letter code: Acetyl-coenzyme A carboxylase carboxyl transferase subunit beta (287 aa).

Residues 33–287 enclose the CoA carboxyltransferase N-terminal domain; the sequence is LFSKCPGCKH…TLLAFHGGQA (255 aa). Residues C37, C40, C55, and C58 each contribute to the Zn(2+) site. Residues 37-58 form a C4-type zinc finger; the sequence is CPGCKHTIYQKDLGNDSVCPNC.

The protein belongs to the AccD/PCCB family. In terms of assembly, acetyl-CoA carboxylase is a heterohexamer composed of biotin carboxyl carrier protein (AccB), biotin carboxylase (AccC) and two subunits each of ACCase subunit alpha (AccA) and ACCase subunit beta (AccD). Requires Zn(2+) as cofactor.

It localises to the cytoplasm. It catalyses the reaction N(6)-carboxybiotinyl-L-lysyl-[protein] + acetyl-CoA = N(6)-biotinyl-L-lysyl-[protein] + malonyl-CoA. Its pathway is lipid metabolism; malonyl-CoA biosynthesis; malonyl-CoA from acetyl-CoA: step 1/1. In terms of biological role, component of the acetyl coenzyme A carboxylase (ACC) complex. Biotin carboxylase (BC) catalyzes the carboxylation of biotin on its carrier protein (BCCP) and then the CO(2) group is transferred by the transcarboxylase to acetyl-CoA to form malonyl-CoA. In Streptococcus sanguinis (strain SK36), this protein is Acetyl-coenzyme A carboxylase carboxyl transferase subunit beta.